A 476-amino-acid polypeptide reads, in one-letter code: Aspartyl/glutamyl-tRNA(Asn/Gln) amidotransferase subunit B (476 aa).

Belongs to the GatB/GatE family. GatB subfamily. Heterotrimer of A, B and C subunits.

It carries out the reaction L-glutamyl-tRNA(Gln) + L-glutamine + ATP + H2O = L-glutaminyl-tRNA(Gln) + L-glutamate + ADP + phosphate + H(+). The catalysed reaction is L-aspartyl-tRNA(Asn) + L-glutamine + ATP + H2O = L-asparaginyl-tRNA(Asn) + L-glutamate + ADP + phosphate + 2 H(+). Its function is as follows. Allows the formation of correctly charged Asn-tRNA(Asn) or Gln-tRNA(Gln) through the transamidation of misacylated Asp-tRNA(Asn) or Glu-tRNA(Gln) in organisms which lack either or both of asparaginyl-tRNA or glutaminyl-tRNA synthetases. The reaction takes place in the presence of glutamine and ATP through an activated phospho-Asp-tRNA(Asn) or phospho-Glu-tRNA(Gln). This Lactobacillus helveticus (strain DPC 4571) protein is Aspartyl/glutamyl-tRNA(Asn/Gln) amidotransferase subunit B.